The chain runs to 1340 residues: WASH complex subunit 2 (1340 aa).

A sufficient for interaction with WASHC3, WASHC4 and WASHC5; required for interaction with WASHC1 region spans residues 1–219; the sequence is MNRTTPDQEL…VGSDRGSIVD (219 aa). A phosphoserine mark is found at Ser-157, Ser-159, Ser-204, Ser-205, and Ser-209. Residues 201 to 213 show a composition bias toward low complexity; the sequence is GELSSEEGSVGSD. Residues 201–404 form a disordered region; the sequence is GELSSEEGSV…SSSKPGKKIP (204 aa). Over residues 219–231 the composition is skewed to acidic residues; that stretch reads DTEEEKEEEESDE. Positions 232–241 are enriched in basic and acidic residues; sequence DFAHHSDNDQ. Acidic residues-rich tracts occupy residues 249–258 and 265–275; these read SDEEEDDDGC and EKEEEDIEDIE. A Phosphoserine modification is found at Ser-287. Over residues 292-306 the composition is skewed to basic and acidic residues; that stretch reads LAARIKGDAVGRVDE. Thr-330 is modified (phosphothreonine). Positions 354–365 are enriched in gly residues; it reads GSGGGLFSGGKG. Positions 355–599 are sufficient for interaction with CCDC93; that stretch reads SGGGLFSGGK…QTLSLQAQGE (245 aa). Residues 356-1340 are interaction with VPS35; that stretch reads GGGLFSGGKG…DDPLNAFGGQ (985 aa). Residues 366–377 carry the LFa 1 motif; that stretch reads LFDDEDEESDLF. 2 positions are modified to phosphoserine: Ser-394 and Ser-396. 3 consecutive short sequence motifs (LFa) follow at residues 410 to 418, 449 to 462, and 481 to 490; these read VFLGDTDVF, LFDD…DDFF, and IFGDDEGDLF. Disordered regions lie at residues 421–586, 618–663, and 695–838; these read ASVP…GGTA, SSDE…KASL, and DSGG…STGV. Over residues 450–461 the composition is skewed to acidic residues; the sequence is FDDDDGDDDDDF. Over residues 506 to 516 the composition is skewed to basic and acidic residues; that stretch reads DENKARAEKKV. The segment covering 517-527 has biased composition (low complexity); that stretch reads SLPSSKNLKPS. Short sequence motifs (LFa) lie at residues 536-547, 571-582, and 616-628; these read LFSDEEDSEDLF, LFEDEDEEDNLF, and LFSS…WNIP. Phosphoserine is present on residues Ser-538 and Ser-543. The segment covering 546–566 has biased composition (low complexity); that stretch reads LFSSQSASKLKGAPLLPGKLP. Residues Ser-618 and Ser-619 each carry the phosphoserine modification. A compositionally biased stretch (basic and acidic residues) spans 636–646; it reads SDSRSKGESRD. 3 short sequence motifs (LFa) span residues 663–673, 689–701, and 725–737; these read LFEEDEEDDLF, LFED…GSLF, and LFSD…AQLG. 4 positions are modified to phosphoserine: Ser-727, Ser-751, Ser-786, and Ser-801. Residues 740–767 are compositionally biased toward basic and acidic residues; that stretch reads PVDKKVESAKESLKFGRTDVAESEKEGL. Residues 802 to 816 carry the LFa 11 motif; it reads LFDEEEDKMEDQNTI. A compositionally biased stretch (basic and acidic residues) spans 822–833; sequence EVGKGRDPDARP. 2 short sequence motifs (LFa) span residues 838–846 and 855–861; these read VFQDEELLF and DPDVDLF. 2 positions are modified to phosphoserine: Ser-873 and Ser-876. Positions 877-887 match the LFa 14 motif; it reads LFGDDEDDDLF. 2 disordered regions span residues 906 to 950 and 987 to 1205; these read DYSV…KEPS and FPSS…EDED. The segment covering 916–930 has biased composition (basic and acidic residues); it reads KHPETIQGIKEKGIW. The interval 936-1340 is interaction with phospholipids; the sequence is QDSSGLAPFK…DDPLNAFGGQ (405 aa). Residues 1027–1045 show a composition bias toward basic residues; sequence NKSRVKMRGKRRPQTRAAR. Positions 1028–1046 are required for interaction with F-actin-capping protein subunit alpha (CAPZA1 or CAPZA2 or CAPZA3); that stretch reads KSRVKMRGKRRPQTRAARR. A phosphoserine mark is found at Ser-1053 and Ser-1086. Positions 1093-1109 are enriched in low complexity; the sequence is EALAAAAAPWEGGPVPG. Ser-1113 carries the phosphoserine modification. Short sequence motifs (LFa) lie at residues 1128 to 1135, 1170 to 1184, 1200 to 1208, 1233 to 1239, 1261 to 1269, and 1289 to 1298; these read LFDSGDIF, MFPA…DDLF, LLEDEDDLF, IFEDDIF, LFDDNIDIF, and IFDDDMDDIF. 2 positions are modified to phosphoserine: Ser-1178 and Ser-1179. The segment at 1301–1325 is disordered; the sequence is GIQAKTAKPKSRSAQAAPEPRFEHK. The LFa 21 motif lies at 1329–1337; it reads IFDDPLNAF.

Belongs to the FAM21 family. As to quaternary structure, component of the WASH core complex also described as WASH regulatory complex (SHRC) composed of WASHC1, WASHC2, WASHC3, WASHC4 and WASHC5; in the complex interacts (via N-terminus) directly with WASHC1. The WASH core complex associates with the F-actin-capping protein dimer (formed by CAPZA1, CAPZA2 or CAPZA3 and CAPZB) in a transient or substoichiometric manner which was initially described as WASH complex. Interacts with VPS35; mediates the association with the retromer CSC complex. Interacts with FKBP15. Interacts with CCDC93, CCDC22, VPS35L; indicative for an association of the WASH core complex with the CCC and retriever complexes. Directly interacts with TBC1D23.

The protein resides in the early endosome membrane. It is found in the cell membrane. Functionally, acts as a component of the WASH core complex that functions as a nucleation-promoting factor (NPF) at the surface of endosomes, where it recruits and activates the Arp2/3 complex to induce actin polymerization, playing a key role in the fission of tubules that serve as transport intermediates during endosome sorting. Mediates the recruitment of the WASH core complex to endosome membranes via binding to phospholipids and VPS35 of the retromer CSC. Mediates the recruitment of the F-actin-capping protein dimer to the WASH core complex probably promoting localized F-actin polymerization needed for vesicle scission. Via its C-terminus binds various phospholipids, most strongly phosphatidylinositol 4-phosphate (PtdIns-(4)P), phosphatidylinositol 5-phosphate (PtdIns-(5)P) and phosphatidylinositol 3,5-bisphosphate (PtdIns-(3,5)P2). Involved in the endosome-to-plasma membrane trafficking and recycling of SNX27-retromer-dependent cargo proteins, such as GLUT1. Required for the association of DNAJC13, ENTR1, ANKRD50 with retromer CSC subunit VPS35. Required for the endosomal recruitment of CCC and retriever complexes subunits COMMD1 and CCDC93 as well as the retrievere complex subunit VPS35L. This chain is WASH complex subunit 2, found in Pongo abelii (Sumatran orangutan).